The primary structure comprises 685 residues: MIDPSSSFDRIKKEARLLREQLHVHNINYHVKDDPVISDGEYDRMMQRLIAIETQFPELSTPDSPTRRIGAKALTAFETAEHAIPMQSLDNAFSDQDVIDFHNRTAKILNTSDIRYTVEPKLDGVAVELRYEQGSLTLALTRGDGTMGEVITDNARTIPSVPLKLAPAGNGTIPDVLEVRGEVIINSKDFEGLNKKRLATGEPLFANPRNAAAGSLRQLDSRVTAKRPLEIFVYGVGRAQELMANFDIGSHSALLESLKRLGFRINPLIRSGLSLTEVLDRFKAFETMRQDLDYEIDGMVIKVDDIVFQERLGTKARSPRWAIAYKFPAMEETTVINDIIVQVGRTGTLTPVAILEPVNIGGVMVARASLHNQDEIQNKDIRINDTVLVKRAGDVIPKVVKPVTALRTGSERVFVMPTHCPVCHSPVRRLDNEAAVKCINASCKAQLKQRLKHFVSKGGFDMEGLGTKLIDQLVDRTLVGSFADLFTLDRETLAAMDRMGEKSATNIVQAIERSKRIPLKRFLFALGMAHTGESAAQLLSSTFFTLEALLKASAEALGAIEGVGPKTADSVVAFFANPDNQETIARMMENGVVIENHTVVESAALDNATFFSEKRVVLTGTLGTLTRSEAKQRLEEQGARVVSSVSKNTDILVAGEASGSKLVKARSLGVTIMDEQTFLEHLDRG.

NAD(+) is bound by residues 39-43 (DGEYD), 88-89 (SL), and glutamate 119. Residue lysine 121 is the N6-AMP-lysine intermediate of the active site. NAD(+)-binding residues include arginine 142, glutamate 182, lysine 302, and lysine 326. Zn(2+)-binding residues include cysteine 420, cysteine 423, cysteine 438, and cysteine 443. Positions 606-685 (DNATFFSEKR…QTFLEHLDRG (80 aa)) constitute a BRCT domain.

This sequence belongs to the NAD-dependent DNA ligase family. LigA subfamily. Requires Mg(2+) as cofactor. Mn(2+) is required as a cofactor.

The catalysed reaction is NAD(+) + (deoxyribonucleotide)n-3'-hydroxyl + 5'-phospho-(deoxyribonucleotide)m = (deoxyribonucleotide)n+m + AMP + beta-nicotinamide D-nucleotide.. DNA ligase that catalyzes the formation of phosphodiester linkages between 5'-phosphoryl and 3'-hydroxyl groups in double-stranded DNA using NAD as a coenzyme and as the energy source for the reaction. It is essential for DNA replication and repair of damaged DNA. The polypeptide is DNA ligase (Desulforapulum autotrophicum (strain ATCC 43914 / DSM 3382 / VKM B-1955 / HRM2) (Desulfobacterium autotrophicum)).